Here is a 312-residue protein sequence, read N- to C-terminus: MKQQLIIGTRSSPLALWQAEFTKAELSKNFPELDIQLKLIKTTGDVLLDSPLSKIGDMGLFTKDIEKHLLAKEIDLAVHSLKDVPTETPEGLILSAFTEREDTRDVIISKNGDNLKQLKPNAKIATSSLRRTSQLLGIRPDFEMGDIRGNLNTRFKRFDESDFDAMILAYAGVHRLNFGDRISEILPHDVLLPAVGQGALGIETRIDDEQTRQIVKVMNNQNSEYCTKAERALLRHLQGGCQIPIGAYATYKNGTLHLSAFVGSVDGKRAIRNEITKENVTAPELAEKTGIELAEELMKQGANEILAEIRKI.

C241 bears the S-(dipyrrolylmethanemethyl)cysteine mark.

Belongs to the HMBS family. In terms of assembly, monomer. It depends on dipyrromethane as a cofactor.

The enzyme catalyses 4 porphobilinogen + H2O = hydroxymethylbilane + 4 NH4(+). The protein operates within porphyrin-containing compound metabolism; protoporphyrin-IX biosynthesis; coproporphyrinogen-III from 5-aminolevulinate: step 2/4. It participates in porphyrin-containing compound metabolism; chlorophyll biosynthesis. Its function is as follows. Tetrapolymerization of the monopyrrole PBG into the hydroxymethylbilane pre-uroporphyrinogen in several discrete steps. This chain is Porphobilinogen deaminase, found in Prosthecochloris aestuarii (strain DSM 271 / SK 413).